Reading from the N-terminus, the 493-residue chain is Keratin, type II cuticular Hb3 (493 aa).

The interval 1-111 (MTCGFNSIGC…PNAQCVKQEE (111 aa)) is head. The 312-residue stretch at 111–422 (EKEQIKSLNS…RLLEGEEQRL (312 aa)) folds into the IF rod domain. The segment at 112-146 (KEQIKSLNSRFAAFIDKVRFLEQQNKLLETKLQFY) is coil 1A. The segment at 147-156 (QNRECCQSNL) is linker 1. The coil 1B stretch occupies residues 157-257 (EPLFAGYIET…YEEEIRILQS (101 aa)). Residue Lys217 forms a Glycyl lysine isopeptide (Lys-Gly) (interchain with G-Cter in SUMO1) linkage. The segment at 258-274 (HISDTSVVVKLDNSRDL) is linker 12. Residues 275-418 (NMDCIVAEIK…ATYRRLLEGE (144 aa)) are coil 2. The tract at residues 419–493 (EQRLCEGVEA…GGGSCGQGRH (75 aa)) is tail.

This sequence belongs to the intermediate filament family. Heterotetramer of two type I and two type II keratins. As to expression, synthesis begins in the cortex 10-15 cell layers above the apex of the dermal papilla and ends abruptly in the middle of the cortex.

The polypeptide is Keratin, type II cuticular Hb3 (KRT83) (Homo sapiens (Human)).